A 266-amino-acid polypeptide reads, in one-letter code: Putative carbamate hydrolase RutD (266 aa).

This sequence belongs to the AB hydrolase superfamily. Hydrolase RutD family.

The enzyme catalyses carbamate + 2 H(+) = NH4(+) + CO2. Involved in pyrimidine catabolism. May facilitate the hydrolysis of carbamate, a reaction that can also occur spontaneously. This chain is Putative carbamate hydrolase RutD, found in Escherichia coli O103:H2 (strain 12009 / EHEC).